The sequence spans 226 residues: tRNA (guanine-N(1)-)-methyltransferase (226 aa).

Residues Gly110 and 130–135 (IGDFIL) each bind S-adenosyl-L-methionine.

Belongs to the RNA methyltransferase TrmD family. In terms of assembly, homodimer.

It localises to the cytoplasm. It catalyses the reaction guanosine(37) in tRNA + S-adenosyl-L-methionine = N(1)-methylguanosine(37) in tRNA + S-adenosyl-L-homocysteine + H(+). Specifically methylates guanosine-37 in various tRNAs. This chain is tRNA (guanine-N(1)-)-methyltransferase, found in Nitratiruptor sp. (strain SB155-2).